Consider the following 357-residue polypeptide: Probable cinnamyl alcohol dehydrogenase 7/8 (357 aa).

Residue Cys47 coordinates Zn(2+). An NADP(+)-binding site is contributed by Ser49. Zn(2+) is bound by residues His69, Glu70, Cys100, Cys103, Cys106, Cys114, and Cys163. Residues Thr167, 188–193, 211–216, Thr251, Gly275, and 298–300 contribute to the NADP(+) site; these read GLGGVG, SSSDKK, and SFI.

This sequence belongs to the zinc-containing alcohol dehydrogenase family. As to quaternary structure, homodimer. The cofactor is Zn(2+).

The catalysed reaction is (E)-cinnamyl alcohol + NADP(+) = (E)-cinnamaldehyde + NADPH + H(+). The enzyme catalyses (E)-coniferol + NADP(+) = (E)-coniferaldehyde + NADPH + H(+). It catalyses the reaction (E)-sinapyl alcohol + NADP(+) = (E)-sinapaldehyde + NADPH + H(+). It carries out the reaction (E)-4-coumaroyl alcohol + NADP(+) = (E)-4-coumaraldehyde + NADPH + H(+). The catalysed reaction is (E)-caffeyl alcohol + NADP(+) = (E)-caffeyl aldehyde + NADPH + H(+). Its pathway is aromatic compound metabolism; phenylpropanoid biosynthesis. In terms of biological role, involved in lignin biosynthesis. Catalyzes the final step specific for the production of lignin monomers. Catalyzes the NADPH-dependent reduction of coniferaldehyde, 5-hydroxyconiferaldehyde, sinapaldehyde, 4-coumaraldehyde and caffeyl aldehyde to their respective alcohols. The chain is Probable cinnamyl alcohol dehydrogenase 7/8 (CAD7) from Picea abies (Norway spruce).